Consider the following 769-residue polypeptide: Metal transporter CNNM4 (769 aa).

Residues 1–175 (MAASAGCYYG…RLRVLEEEKP (175 aa)) are Extracellular-facing. N-linked (GlcNAc...) asparagine glycosylation is found at N99 and N115. A CNNM transmembrane domain is found at 175-355 (PLLPIWLQAC…EPYSGIVREE (181 aa)). The chain crosses the membrane as a helical span at residues 176–196 (LLPIWLQACIIAVLLTLSGIF). The Cytoplasmic segment spans residues 197–237 (SGLNLGLMALDPMELRVVQRCGTEKEKRYASKIEPVRRKGN). The segment at residues 238 to 258 (YLLCSLLLGNVLVNTTLTALL) is an intramembrane region (helical). The Cytoplasmic portion of the chain corresponds to 259-261 (DEL). The helical transmembrane segment at 262 to 282 (IGSGLAAVLASTTGIVVLGEI) threads the bilayer. At 283–292 (VPQALCSRHG) the chain is on the extracellular side. The chain crosses the membrane as a helical span at residues 293–313 (LAVGANTLWLTRIFMLLTFPV). The Cytoplasmic portion of the chain corresponds to 314-769 (AYPVSRLLDC…SQHSLQHNAV (456 aa)). 2 CBS domains span residues 374 to 435 (MTKV…CTPL) and 442 to 508 (YSHP…ILDE). A disordered region spans residues 717 to 769 (LMSSRLDSSPQSPEGGTRKPDSTLSERSEVLEDETTSLLNQRNSQHSLQHNAV). Polar residues predominate over residues 721-730 (RLDSSPQSPE). Residues 732–746 (GTRKPDSTLSERSEV) show a composition bias toward basic and acidic residues. Positions 752–769 (TSLLNQRNSQHSLQHNAV) are enriched in polar residues.

This sequence belongs to the ACDP family.

Its subcellular location is the cell membrane. Probable metal transporter. The protein is Metal transporter CNNM4 (cnnm4) of Xenopus tropicalis (Western clawed frog).